We begin with the raw amino-acid sequence, 321 residues long: Ribose-phosphate pyrophosphokinase (321 aa).

ATP is bound by residues 44-46 (DGE) and 103-104 (RQ). Positions 137 and 179 each coordinate Mg(2+). Lysine 202 is a catalytic residue. D-ribose 5-phosphate contacts are provided by residues arginine 204, aspartate 228, and 232-236 (DTAGT).

It belongs to the ribose-phosphate pyrophosphokinase family. Class I subfamily. In terms of assembly, homohexamer. It depends on Mg(2+) as a cofactor.

Its subcellular location is the cytoplasm. The enzyme catalyses D-ribose 5-phosphate + ATP = 5-phospho-alpha-D-ribose 1-diphosphate + AMP + H(+). The protein operates within metabolic intermediate biosynthesis; 5-phospho-alpha-D-ribose 1-diphosphate biosynthesis; 5-phospho-alpha-D-ribose 1-diphosphate from D-ribose 5-phosphate (route I): step 1/1. In terms of biological role, involved in the biosynthesis of the central metabolite phospho-alpha-D-ribosyl-1-pyrophosphate (PRPP) via the transfer of pyrophosphoryl group from ATP to 1-hydroxyl of ribose-5-phosphate (Rib-5-P). This is Ribose-phosphate pyrophosphokinase from Staphylococcus saprophyticus subsp. saprophyticus (strain ATCC 15305 / DSM 20229 / NCIMB 8711 / NCTC 7292 / S-41).